The primary structure comprises 264 residues: 3-methyl-2-oxobutanoate hydroxymethyltransferase (264 aa).

The Mg(2+) site is built by Asp-45 and Asp-84. Residues 45 to 46 (DS), Asp-84, and Lys-112 contribute to the 3-methyl-2-oxobutanoate site. Glu-114 contacts Mg(2+). Glu-181 acts as the Proton acceptor in catalysis.

Belongs to the PanB family. Homodecamer; pentamer of dimers. It depends on Mg(2+) as a cofactor.

Its subcellular location is the cytoplasm. The catalysed reaction is 3-methyl-2-oxobutanoate + (6R)-5,10-methylene-5,6,7,8-tetrahydrofolate + H2O = 2-dehydropantoate + (6S)-5,6,7,8-tetrahydrofolate. Its pathway is cofactor biosynthesis; (R)-pantothenate biosynthesis; (R)-pantoate from 3-methyl-2-oxobutanoate: step 1/2. Its function is as follows. Catalyzes the reversible reaction in which hydroxymethyl group from 5,10-methylenetetrahydrofolate is transferred onto alpha-ketoisovalerate to form ketopantoate. The polypeptide is 3-methyl-2-oxobutanoate hydroxymethyltransferase (Pseudoalteromonas translucida (strain TAC 125)).